The sequence spans 357 residues: Alternative oxidase, mitochondrial (357 aa).

Residues 152–172 (LTRCIFLESIAGVPGAVASFI) form a helical membrane-spanning segment. 3 residues coordinate Fe cation: Glu159, Glu198, and His201. A helical transmembrane segment spans residues 218–238 (IIYVGQGVFCNLFFLFYLANP). Fe cation is bound by residues Glu249, Glu304, and His307. The disordered stretch occupies residues 330–357 (IPDLKEPQPESGLKVTKPHGWEKEELKL). A compositionally biased stretch (basic and acidic residues) spans 348-357 (HGWEKEELKL).

Belongs to the alternative oxidase family. Fe cation serves as cofactor.

The protein resides in the mitochondrion inner membrane. In terms of biological role, catalyzes cyanide-resistant oxygen consumption. May increase respiration when the cytochrome respiratory pathway is restricted, or in response to low temperatures. The polypeptide is Alternative oxidase, mitochondrial (STO1) (Scheffersomyces stipitis (strain ATCC 58785 / CBS 6054 / NBRC 10063 / NRRL Y-11545) (Yeast)).